The chain runs to 334 residues: Glycerol-3-phosphate dehydrogenase [NAD(P)+] 2 (334 aa).

NADPH-binding residues include W16, R36, R37, and K110. K110 and G140 together coordinate sn-glycerol 3-phosphate. Position 144 (A144) interacts with NADPH. 5 residues coordinate sn-glycerol 3-phosphate: K195, D248, S258, R259, and N260. K195 serves as the catalytic Proton acceptor. R259 serves as a coordination point for NADPH. NADPH-binding residues include V282 and E284.

Belongs to the NAD-dependent glycerol-3-phosphate dehydrogenase family.

It localises to the cytoplasm. The enzyme catalyses sn-glycerol 3-phosphate + NAD(+) = dihydroxyacetone phosphate + NADH + H(+). It catalyses the reaction sn-glycerol 3-phosphate + NADP(+) = dihydroxyacetone phosphate + NADPH + H(+). Its pathway is membrane lipid metabolism; glycerophospholipid metabolism. Functionally, catalyzes the reduction of the glycolytic intermediate dihydroxyacetone phosphate (DHAP) to sn-glycerol 3-phosphate (G3P), the key precursor for phospholipid synthesis. The sequence is that of Glycerol-3-phosphate dehydrogenase [NAD(P)+] 2 from Mycobacterium tuberculosis (strain ATCC 25618 / H37Rv).